The chain runs to 357 residues: Protein NDRG2 (357 aa).

The segment at 1 to 28 (MAELQEVQITEEKPLLPGQTPEAAKTHS) is disordered. A2 carries the N-acetylalanine modification. A Phosphothreonine modification is found at T20. S312 and S314 each carry phosphoserine. T316 is subject to Phosphothreonine. S318 bears the Phosphoserine mark. At T320 the chain carries Phosphothreonine. Residues 320-357 (TSAASVDGNRSRSRTLSQSSESGTLSSGPPGHTMEVSC) form a disordered region. Phosphoserine is present on residues S321, S324, and S330. The span at 333–347 (RTLSQSSESGTLSSG) shows a compositional bias: low complexity. Position 334 is a phosphothreonine (T334). Residues S336, S338, S339, and S341 each carry the phosphoserine modification. T343 is subject to Phosphothreonine. At S356 the chain carries Phosphoserine.

It belongs to the NDRG family. Interacts with CTNNB1.

The protein resides in the cytoplasm. It localises to the perinuclear region. It is found in the cell projection. Its subcellular location is the growth cone. In terms of biological role, contributes to the regulation of the Wnt signaling pathway. Down-regulates CTNNB1-mediated transcriptional activation of target genes, such as CCND1, and may thereby act as tumor suppressor. May be involved in dendritic cell and neuron differentiation. This Pan troglodytes (Chimpanzee) protein is Protein NDRG2 (NDRG2).